Consider the following 593-residue polypeptide: Cell surface glycoprotein (593 aa).

Residues 1–22 (MRKFTLLMLLLIVISMSGIAGA) form the signal peptide. N-linked (GalNAc...) asparagine glycosylation is found at Asn-29, Asn-58, Asn-66, Asn-74, Asn-114, Asn-122, Asn-145, Asn-148, Asn-158, Asn-176, Asn-208, Asn-231, Asn-326, Asn-336, Asn-340, Asn-431, Asn-471, Asn-500, and Asn-516.

Post-translationally, N-glycosylated; contains glycans composed of methyl-Man, Man and GalNAc residues in a molar ratio of 2:3:1.

It is found in the secreted. It localises to the cell wall. Its subcellular location is the S-layer. Functionally, the S-layer is a paracrystalline mono-layered assembly of proteins which coat the surface of the cell. The protein is Cell surface glycoprotein (slgA) of Methanothermus fervidus (strain ATCC 43054 / DSM 2088 / JCM 10308 / V24 S).